The chain runs to 387 residues: Gamma-butyrobetaine dioxygenase (387 aa).

C38, C40, C43, and H82 together coordinate Zn(2+). The Fe cation site is built by H202, D204, and H347. A Phosphoserine modification is found at S351.

The protein belongs to the gamma-BBH/TMLD family. Requires Fe(2+) as cofactor. It depends on L-ascorbate as a cofactor.

It is found in the cytoplasm. The catalysed reaction is 4-(trimethylamino)butanoate + 2-oxoglutarate + O2 = carnitine + succinate + CO2. The protein operates within amine and polyamine biosynthesis; carnitine biosynthesis. Its function is as follows. Catalyzes the formation of L-carnitine from gamma-butyrobetaine. This chain is Gamma-butyrobetaine dioxygenase (Bbox1), found in Mus musculus (Mouse).